Here is a 268-residue protein sequence, read N- to C-terminus: Hydroxyethylthiazole kinase (268 aa).

Position 49 (Met49) interacts with substrate. ATP is bound by residues Lys124 and Thr168. Position 195 (Ala195) interacts with substrate.

This sequence belongs to the Thz kinase family. The cofactor is Mg(2+).

It catalyses the reaction 5-(2-hydroxyethyl)-4-methylthiazole + ATP = 4-methyl-5-(2-phosphooxyethyl)-thiazole + ADP + H(+). Its pathway is cofactor biosynthesis; thiamine diphosphate biosynthesis; 4-methyl-5-(2-phosphoethyl)-thiazole from 5-(2-hydroxyethyl)-4-methylthiazole: step 1/1. Its function is as follows. Catalyzes the phosphorylation of the hydroxyl group of 4-methyl-5-beta-hydroxyethylthiazole (THZ). The protein is Hydroxyethylthiazole kinase of Archaeoglobus fulgidus (strain ATCC 49558 / DSM 4304 / JCM 9628 / NBRC 100126 / VC-16).